Reading from the N-terminus, the 477-residue chain is Ribulose bisphosphate carboxylase large chain (477 aa).

A propeptide spanning residues 1 to 2 is cleaved from the precursor; that stretch reads MS. Pro3 carries the N-acetylproline modification. Lys14 is modified (N6,N6,N6-trimethyllysine). Residues Asn123 and Thr173 each contribute to the substrate site. Catalysis depends on Lys175, which acts as the Proton acceptor. Lys177 contacts substrate. Mg(2+) is bound by residues Lys201, Asp203, and Glu204. An N6-carboxylysine modification is found at Lys201. His294 (proton acceptor) is an active-site residue. 3 residues coordinate substrate: Arg295, His327, and Ser379.

This sequence belongs to the RuBisCO large chain family. Type I subfamily. As to quaternary structure, heterohexadecamer of 8 large chains and 8 small chains; disulfide-linked. The disulfide link is formed within the large subunit homodimers. Mg(2+) serves as cofactor. In terms of processing, the disulfide bond which can form in the large chain dimeric partners within the hexadecamer appears to be associated with oxidative stress and protein turnover.

It is found in the plastid. The protein resides in the chloroplast. The enzyme catalyses 2 (2R)-3-phosphoglycerate + 2 H(+) = D-ribulose 1,5-bisphosphate + CO2 + H2O. The catalysed reaction is D-ribulose 1,5-bisphosphate + O2 = 2-phosphoglycolate + (2R)-3-phosphoglycerate + 2 H(+). In terms of biological role, ruBisCO catalyzes two reactions: the carboxylation of D-ribulose 1,5-bisphosphate, the primary event in carbon dioxide fixation, as well as the oxidative fragmentation of the pentose substrate in the photorespiration process. Both reactions occur simultaneously and in competition at the same active site. In Agrostis stolonifera (Creeping bentgrass), this protein is Ribulose bisphosphate carboxylase large chain.